We begin with the raw amino-acid sequence, 169 residues long: 16S rRNA aminocarboxypropyltransferase (169 aa).

The S-adenosyl-L-methionine site is built by Thr15, Val65, Leu88, and Thr107.

The protein belongs to the TDD superfamily. TSR3 family.

It is found in the cytoplasm. It carries out the reaction an N(1)-methylpseudouridine in rRNA + S-adenosyl-L-methionine = N(1)-methyl-N(3)-[(3S)-3-amino-3-carboxypropyl]pseudouridine in rRNA + S-methyl-5'-thioadenosine + H(+). Aminocarboxypropyltransferase that catalyzes the aminocarboxypropyl transfer on pseudouridine corresponding to position 914 in M.jannaschii 16S rRNA. It constitutes the last step in biosynthesis of the hypermodified N1-methyl-N3-(3-amino-3-carboxypropyl) pseudouridine (m1acp3-Psi). The polypeptide is 16S rRNA aminocarboxypropyltransferase (Methanopyrus kandleri (strain AV19 / DSM 6324 / JCM 9639 / NBRC 100938)).